We begin with the raw amino-acid sequence, 594 residues long: Actin-histidine N-methyltransferase (594 aa).

A disordered region spans residues methionine 1–proline 22. Residues glutamine 10 to valine 20 are compositionally biased toward polar residues. Residues arginine 75, glutamate 104–phenylalanine 106, arginine 254, aspartate 275–histidine 279, and serine 325–phenylalanine 327 contribute to the S-adenosyl-L-methionine site. Residues glutamate 94–glycine 314 enclose the SET domain. The tract at residues glycine 551–leucine 594 is disordered.

The protein belongs to the class V-like SAM-binding methyltransferase superfamily. SETD3 actin-histidine methyltransferase family. As to quaternary structure, interacts with MYOD1. Post-translationally, phosphorylated by GSK3B, which is required for recognition by the SCF(FBXW7) complex and subsequent degradation. Ubiquitinated by the SCF(FBXW7) complex following phosphorylation by GSK3B, leading to its degradation by the proteasome. Prominently expressed in the heart and skeletal muscles and is also detected weakly in the stomach, small intestine, and colon.

Its subcellular location is the cytoplasm. The protein localises to the nucleus. The catalysed reaction is L-histidyl-[protein] + S-adenosyl-L-methionine = N(tele)-methyl-L-histidyl-[protein] + S-adenosyl-L-homocysteine + H(+). In terms of biological role, protein-histidine N-methyltransferase that specifically mediates 3-methylhistidine (tele-methylhistidine) methylation of actin at 'His-73'. Histidine methylation of actin is required for smooth muscle contraction of the laboring uterus during delivery. Does not have protein-lysine N-methyltransferase activity and probably only catalyzes histidine methylation of actin. This Mus musculus (Mouse) protein is Actin-histidine N-methyltransferase.